Here is a 327-residue protein sequence, read N- to C-terminus: Biotin synthase (327 aa).

A Radical SAM core domain is found at 48–278; it reads YCGDGVGLCM…DRHITVCGGR (231 aa). [4Fe-4S] cluster is bound by residues Cys-66, Cys-70, and Cys-73. The [2Fe-2S] cluster site is built by Ser-143 and Cys-203.

This sequence belongs to the radical SAM superfamily. Biotin synthase family. As to quaternary structure, homodimer. Requires [4Fe-4S] cluster as cofactor. [2Fe-2S] cluster is required as a cofactor.

The catalysed reaction is (4R,5S)-dethiobiotin + (sulfur carrier)-SH + 2 reduced [2Fe-2S]-[ferredoxin] + 2 S-adenosyl-L-methionine = (sulfur carrier)-H + biotin + 2 5'-deoxyadenosine + 2 L-methionine + 2 oxidized [2Fe-2S]-[ferredoxin]. It functions in the pathway cofactor biosynthesis; biotin biosynthesis; biotin from 7,8-diaminononanoate: step 2/2. Functionally, catalyzes the conversion of dethiobiotin (DTB) to biotin by the insertion of a sulfur atom into dethiobiotin via a radical-based mechanism. The chain is Biotin synthase from Syntrophotalea carbinolica (strain DSM 2380 / NBRC 103641 / GraBd1) (Pelobacter carbinolicus).